Reading from the N-terminus, the 162-residue chain is Peptidyl-prolyl cis-trans isomerase (162 aa).

The PPIase cyclophilin-type domain maps to 5–161 (FFDVIANGQP…ARIVIDKCGT (157 aa)).

Belongs to the cyclophilin-type PPIase family. PPIase A subfamily.

It is found in the cytoplasm. It catalyses the reaction [protein]-peptidylproline (omega=180) = [protein]-peptidylproline (omega=0). With respect to regulation, binds cyclosporin A (CsA). CsA mediates some of its effects via an inhibitory action on PPIase. PPIases accelerate the folding of proteins. It catalyzes the cis-trans isomerization of proline imidic peptide bonds in oligopeptides. In Schizosaccharomyces pombe (strain 972 / ATCC 24843) (Fission yeast), this protein is Peptidyl-prolyl cis-trans isomerase (ppi1).